The chain runs to 359 residues: MSKSIVLLPGDHVGTEVVAEAVKVLKAIERTTPGTSFSFSTHLIGGAAIDATGVPLPDEALEAAKASDAVLLGAVGGPKWGTGDVRPEQGLLKIRKELGLYANLRPCSFASSKLVDLSPLKREIVEGTDFVVVRELVGGIYFGERKEDDGSGVASDTETYSVPEVERITRMAAFLALQHNPPQTVWSLDKANVLASSRLWRKTVTRVMTEEFPTVPFQHQLIDSAAMILVQKPTKLNGVVLTSNMFGDIISDEASVIPGSLGLLPSASLASLPDTNTAFGLYEPCHGSAPDLPAGKVNPLACILSAAMMLRLSLDNAAAADRIEQAVREVIDSGVATADLGGSSSTGEVGDAIVKALEK.

77-88 lines the NAD(+) pocket; sequence GPKWGTGDVRPE. Residues R95, R105, R134, and D223 each contribute to the substrate site. Residues D223, D248, and D252 each coordinate Mg(2+). 287-298 is a binding site for NAD(+); it reads GSAPDLPAGKVN.

It belongs to the isocitrate and isopropylmalate dehydrogenases family. As to quaternary structure, homodimer. It depends on Mg(2+) as a cofactor. Requires Mn(2+) as cofactor.

The protein localises to the cytoplasm. It catalyses the reaction (2R,3S)-3-isopropylmalate + NAD(+) = 4-methyl-2-oxopentanoate + CO2 + NADH. It participates in amino-acid biosynthesis; L-leucine biosynthesis; L-leucine from 3-methyl-2-oxobutanoate: step 3/4. Its function is as follows. Catalyzes the oxidation of 3-carboxy-2-hydroxy-4-methylpentanoate (3-isopropylmalate) to 3-carboxy-4-methyl-2-oxopentanoate. The product decarboxylates to 4-methyl-2 oxopentanoate. This chain is 3-isopropylmalate dehydrogenase (LEU2), found in Diutina rugosa (Yeast).